The primary structure comprises 426 residues: Dihydroorotase (426 aa).

Residues His-58 and His-60 each coordinate Zn(2+). Substrate is bound by residues His-60–Arg-62 and Asn-92. Zn(2+) is bound by residues Asp-150, His-177, and His-230. Residue Asn-276 participates in substrate binding. Asp-303 contributes to the Zn(2+) binding site. Asp-303 is a catalytic residue. Substrate contacts are provided by residues His-307 and Phe-321–Gly-322.

It belongs to the metallo-dependent hydrolases superfamily. DHOase family. Class I DHOase subfamily. The cofactor is Zn(2+).

The catalysed reaction is (S)-dihydroorotate + H2O = N-carbamoyl-L-aspartate + H(+). The protein operates within pyrimidine metabolism; UMP biosynthesis via de novo pathway; (S)-dihydroorotate from bicarbonate: step 3/3. In terms of biological role, catalyzes the reversible cyclization of carbamoyl aspartate to dihydroorotate. In Listeria welshimeri serovar 6b (strain ATCC 35897 / DSM 20650 / CCUG 15529 / CIP 8149 / NCTC 11857 / SLCC 5334 / V8), this protein is Dihydroorotase.